The sequence spans 104 residues: MMLKPSIDTLLDKVPSKYSLVILEAKRAHELEAGAPATQGFKSEKSTLRALEEIESGNVTIHLDPEGKREAVRRRIEEEKRRKEEEEKKIKEQIAKEKEDGEKI.

Positions 76 to 104 are disordered; that stretch reads IEEEKRRKEEEEKKIKEQIAKEKEDGEKI.

It belongs to the RNA polymerase subunit omega family. As to quaternary structure, the RNAP catalytic core consists of 2 alpha, 1 beta, 1 beta' and 1 omega subunit. When a sigma factor is associated with the core the holoenzyme is formed, which can initiate transcription.

The catalysed reaction is RNA(n) + a ribonucleoside 5'-triphosphate = RNA(n+1) + diphosphate. Promotes RNA polymerase assembly. Latches the N- and C-terminal regions of the beta' subunit thereby facilitating its interaction with the beta and alpha subunits. The polypeptide is DNA-directed RNA polymerase subunit omega (Streptococcus pneumoniae (strain CGSP14)).